Reading from the N-terminus, the 192-residue chain is Probable GTP-binding protein EngB (192 aa).

The EngB-type G domain occupies 22 to 192 (QLPEIVFVGR…LLEQLAIYTG (171 aa)). Residues 30–37 (GRSNVGKS), 57–61 (GKTQL), 75–78 (DLPG), 142–145 (TKYD), and 172–174 (YSA) each bind GTP. Residues Ser-37 and Thr-59 each contribute to the Mg(2+) site.

It belongs to the TRAFAC class TrmE-Era-EngA-EngB-Septin-like GTPase superfamily. EngB GTPase family. It depends on Mg(2+) as a cofactor.

Necessary for normal cell division and for the maintenance of normal septation. This is Probable GTP-binding protein EngB from Chlorobium phaeobacteroides (strain BS1).